A 271-amino-acid chain; its full sequence is 3-methyl-2-oxobutanoate hydroxymethyltransferase (271 aa).

Mg(2+)-binding residues include D44 and D83. Residues 44 to 45 (DS), D83, and K112 each bind 3-methyl-2-oxobutanoate. Residue E114 coordinates Mg(2+). E181 serves as the catalytic Proton acceptor.

The protein belongs to the PanB family. In terms of assembly, homodecamer; pentamer of dimers. Requires Mg(2+) as cofactor.

The protein resides in the cytoplasm. The enzyme catalyses 3-methyl-2-oxobutanoate + (6R)-5,10-methylene-5,6,7,8-tetrahydrofolate + H2O = 2-dehydropantoate + (6S)-5,6,7,8-tetrahydrofolate. Its pathway is cofactor biosynthesis; coenzyme A biosynthesis. Functionally, catalyzes the reversible reaction in which hydroxymethyl group from 5,10-methylenetetrahydrofolate is transferred onto alpha-ketoisovalerate to form ketopantoate. This is 3-methyl-2-oxobutanoate hydroxymethyltransferase from Staphylothermus marinus (strain ATCC 43588 / DSM 3639 / JCM 9404 / F1).